The primary structure comprises 486 residues: Regulatory protein ViaA (486 aa).

Belongs to the ViaA family. Homodimer. Interacts with RavA.

Its subcellular location is the cytoplasm. In terms of biological role, component of the RavA-ViaA chaperone complex, which may act on the membrane to optimize the function of some of the respiratory chains. ViaA stimulates the ATPase activity of RavA. The polypeptide is Regulatory protein ViaA (Erwinia tasmaniensis (strain DSM 17950 / CFBP 7177 / CIP 109463 / NCPPB 4357 / Et1/99)).